Reading from the N-terminus, the 1089-residue chain is Platelet-derived growth factor receptor alpha (1089 aa).

Positions 1–24 are cleaved as a signal peptide; it reads MGTSHQVFLVLSCLLTGPGLISCQ. Ig-like C2-type domains follow at residues 25 to 113, 117 to 201, 202 to 306, 319 to 410, and 414 to 517; these read LLLP…SEIE, IYIY…FKTS, EFNV…KRVT, PTFG…FELS, and PASI…LKLV. The Extracellular segment spans residues 25-528; sequence LLLPSILPNE…PTLRSELTVA (504 aa). Residues Asn-42, Asn-76, Asn-89, Asn-103, and Asn-179 are each glycosylated (N-linked (GlcNAc...) asparagine). Cys-49 and Cys-100 form a disulfide bridge. 2 cysteine pairs are disulfide-bonded: Cys-150–Cys-189 and Cys-235–Cys-290. Residues Asn-353, Asn-359, Asn-458, Asn-468, and Asn-506 are each glycosylated (N-linked (GlcNAc...) asparagine). A disulfide bridge links Cys-435 with Cys-501. A helical transmembrane segment spans residues 529–549; that stretch reads AAVLVLLVIVIVSLIVLVVIW. Over 550-1089 the chain is Cytoplasmic; the sequence is KQKPRYEIRW…SSDLVEDSFL (540 aa). 2 positions are modified to phosphotyrosine; by autocatalysis: Tyr-572 and Tyr-574. A Protein kinase domain is found at 593 to 954; the sequence is LVLGRILGSG…HLSEIVENLL (362 aa). ATP contacts are provided by residues 599–607 and Lys-627; that span reads LGSGAFGKV. Residues Tyr-720, Tyr-731, Tyr-742, Tyr-754, Tyr-762, and Tyr-768 each carry the phosphotyrosine; by autocatalysis modification. Asp-818 functions as the Proton acceptor in the catalytic mechanism. Phosphotyrosine; by autocatalysis is present on residues Tyr-849, Tyr-988, and Tyr-1018. Residues 1018–1089 form a disordered region; sequence YIIPLPDIDP…SSDLVEDSFL (72 aa). A compositionally biased stretch (polar residues) spans 1041–1059; sequence SSQTSEESAIETGSSSSTF. A compositionally biased stretch (acidic residues) spans 1065–1089; sequence ETIEDIDMMDDIGIDSSDLVEDSFL.

Belongs to the protein kinase superfamily. Tyr protein kinase family. CSF-1/PDGF receptor subfamily. As to quaternary structure, interacts with homodimeric PDGFA, PDGFB and PDGFC, and with heterodimers formed by PDGFA and PDGFB. Monomer in the absence of bound ligand. Interaction with dimeric PDGFA, PDGFB and/or PDGFC leads to receptor dimerization, where both PDGFRA homodimers and heterodimers with PDGFRB are observed. Interacts (tyrosine phosphorylated) with SHB (via SH2 domain). Interacts (tyrosine phosphorylated) with SHF (via SH2 domain). Interacts (tyrosine phosphorylated) with SRC (via SH2 domain). Interacts (tyrosine phosphorylated) with PIK3R1. Interacts (tyrosine phosphorylated) with PLCG1 (via SH2 domain). Interacts (tyrosine phosphorylated) with CRK, GRB2 and GRB7. Interacts with CD248; this interaction promotes PDGF receptor signaling pathway. Post-translationally, ubiquitinated, leading to its internalization and degradation. In terms of processing, autophosphorylated on tyrosine residues upon ligand binding. Autophosphorylation occurs in trans, i.e. one subunit of the dimeric receptor phosphorylates tyrosine residues on the other subunit. Phosphorylation at Tyr-731 and Tyr-742 is important for interaction with PIK3R1. Phosphorylation at Tyr-720 and Tyr-754 is important for interaction with PTPN11. Phosphorylation at Tyr-762 is important for interaction with CRK. Phosphorylation at Tyr-572 and Tyr-574 is important for interaction with SRC and SRC family members. Phosphorylation at Tyr-988 and Tyr-1018 is important for interaction with PLCG1. In terms of tissue distribution, focally expressed in cortical interstitial cells and highly expressed in the interstitium of the papillary region. Also expressed by adventitial cells in arterial vessels. Up-regulated in areas of renal fibrosis. In mice with unilateral ureteral obstruction, expression in cortical interstitial cells becomes prominent at day 4 which increases progressively until day 14.

The protein resides in the cell membrane. It is found in the cell projection. It localises to the cilium. The protein localises to the golgi apparatus. The enzyme catalyses L-tyrosyl-[protein] + ATP = O-phospho-L-tyrosyl-[protein] + ADP + H(+). Present in an inactive conformation in the absence of bound ligand. Binding of PDGFA and/or PDGFB leads to dimerization and activation by autophosphorylation on tyrosine residues. Inhibited by imatinib, nilotinib and sorafenib. Functionally, tyrosine-protein kinase that acts as a cell-surface receptor for PDGFA, PDGFB and PDGFC and plays an essential role in the regulation of embryonic development, cell proliferation, survival and chemotaxis. Depending on the context, promotes or inhibits cell proliferation and cell migration. Plays an important role in the differentiation of bone marrow-derived mesenchymal stem cells. Required for normal skeleton development and cephalic closure during embryonic development. Required for normal development of the mucosa lining the gastrointestinal tract, and for recruitment of mesenchymal cells and normal development of intestinal villi. Plays a role in cell migration and chemotaxis in wound healing. Plays a role in platelet activation, secretion of agonists from platelet granules, and in thrombin-induced platelet aggregation. Binding of its cognate ligands - homodimeric PDGFA, homodimeric PDGFB, heterodimers formed by PDGFA and PDGFB or homodimeric PDGFC -leads to the activation of several signaling cascades; the response depends on the nature of the bound ligand and is modulated by the formation of heterodimers between PDGFRA and PDGFRB. Phosphorylates PIK3R1, PLCG1, and PTPN11. Activation of PLCG1 leads to the production of the cellular signaling molecules diacylglycerol and inositol 1,4,5-trisphosphate, mobilization of cytosolic Ca(2+) and the activation of protein kinase C. Phosphorylates PIK3R1, the regulatory subunit of phosphatidylinositol 3-kinase, and thereby mediates activation of the AKT1 signaling pathway. Mediates activation of HRAS and of the MAP kinases MAPK1/ERK2 and/or MAPK3/ERK1. Promotes activation of STAT family members STAT1, STAT3 and STAT5A and/or STAT5B. Receptor signaling is down-regulated by protein phosphatases that dephosphorylate the receptor and its down-stream effectors, and by rapid internalization of the activated receptor. This Mus musculus (Mouse) protein is Platelet-derived growth factor receptor alpha (Pdgfra).